A 125-amino-acid polypeptide reads, in one-letter code: Large ribosomal subunit protein bL20 (125 aa).

This sequence belongs to the bacterial ribosomal protein bL20 family.

In terms of biological role, binds directly to 23S ribosomal RNA and is necessary for the in vitro assembly process of the 50S ribosomal subunit. It is not involved in the protein synthesizing functions of that subunit. This is Large ribosomal subunit protein bL20 from Methylobacterium sp. (strain 4-46).